Reading from the N-terminus, the 527-residue chain is Protein PyrBI (527 aa).

The aspartate carbamoyltransferase stretch occupies residues 1–342 (MKRDFLGRTL…MFGGALEAPF (342 aa)). A linker region spans residues 343–357 (DTSKKEEKPEEDFII). The tract at residues 368 to 527 (VQKEGKRGIK…PHSFEEIWSI (160 aa)) is aspartate carbamoyltransferase regulatory region. Zn(2+)-binding residues include Cys-483, Cys-488, Cys-512, and Cys-515.

The protein in the N-terminal section; belongs to the aspartate/ornithine carbamoyltransferase superfamily. ATCase family. It in the C-terminal section; belongs to the PyrI family.

It catalyses the reaction carbamoyl phosphate + L-aspartate = N-carbamoyl-L-aspartate + phosphate + H(+). It functions in the pathway pyrimidine metabolism; UMP biosynthesis via de novo pathway; (S)-dihydroorotate from bicarbonate: step 2/3. The polypeptide is Protein PyrBI (pyrBI) (Thermotoga maritima (strain ATCC 43589 / DSM 3109 / JCM 10099 / NBRC 100826 / MSB8)).